The primary structure comprises 805 residues: Leucine--tRNA ligase (805 aa).

The 'HIGH' region signature appears at 41 to 52; sequence PYPSGAGLHVGH. A 'KMSKS' region motif is present at residues 577 to 581; that stretch reads KMSKS. K580 serves as a coordination point for ATP.

It belongs to the class-I aminoacyl-tRNA synthetase family.

Its subcellular location is the cytoplasm. It catalyses the reaction tRNA(Leu) + L-leucine + ATP = L-leucyl-tRNA(Leu) + AMP + diphosphate. This chain is Leucine--tRNA ligase, found in Staphylococcus aureus (strain USA300).